The chain runs to 155 residues: Cytochrome c-type biogenesis protein CcmE (155 aa).

Residues 1-8 lie on the Cytoplasmic side of the membrane; sequence MNPVRKRR. The chain crosses the membrane as a helical; Signal-anchor for type II membrane protein span at residues 9–29; that stretch reads LFIVLAILAGVGAAVALALSA. The Periplasmic segment spans residues 30–155; it reads LQQNINLFYT…YENGKPGGAQ (126 aa). Heme contacts are provided by histidine 124 and tyrosine 128.

Belongs to the CcmE/CycJ family.

It is found in the cell inner membrane. In terms of biological role, heme chaperone required for the biogenesis of c-type cytochromes. Transiently binds heme delivered by CcmC and transfers the heme to apo-cytochromes in a process facilitated by CcmF and CcmH. This is Cytochrome c-type biogenesis protein CcmE from Azotobacter vinelandii (strain DJ / ATCC BAA-1303).